We begin with the raw amino-acid sequence, 525 residues long: GMP synthase [glutamine-hydrolyzing] (525 aa).

The region spanning 9-207 (RILILDFGSQ…VRDICQCEAL (199 aa)) is the Glutamine amidotransferase type-1 domain. Cys86 (nucleophile) is an active-site residue. Residues His181 and Glu183 contribute to the active site. Residues 208–400 (WTPAKIIDDA…LGLPYDMLYR (193 aa)) form the GMPS ATP-PPase domain. 235 to 241 (SGGVDSS) serves as a coordination point for ATP.

Homodimer.

The catalysed reaction is XMP + L-glutamine + ATP + H2O = GMP + L-glutamate + AMP + diphosphate + 2 H(+). The protein operates within purine metabolism; GMP biosynthesis; GMP from XMP (L-Gln route): step 1/1. Functionally, catalyzes the synthesis of GMP from XMP. This Escherichia fergusonii (strain ATCC 35469 / DSM 13698 / CCUG 18766 / IAM 14443 / JCM 21226 / LMG 7866 / NBRC 102419 / NCTC 12128 / CDC 0568-73) protein is GMP synthase [glutamine-hydrolyzing].